We begin with the raw amino-acid sequence, 425 residues long: Apolipoprotein N-acyltransferase (425 aa).

Transmembrane regions (helical) follow at residues 12–32 (LLAC…AYAI), 34–54 (NPYI…LAFL), 60–80 (SAFA…ALSF), 88–108 (LLPL…YLLL), 120–140 (FLGS…DSFF), and 142–162 (YSVF…CIFL). Residues 201–425 (VSTKTPQDLK…LGDILFRKRS (225 aa)) enclose the CN hydrolase domain. E242 acts as the Proton acceptor in catalysis. Residue K296 is part of the active site. The Nucleophile role is filled by C349.

Belongs to the CN hydrolase family. Apolipoprotein N-acyltransferase subfamily.

Its subcellular location is the cell inner membrane. The catalysed reaction is N-terminal S-1,2-diacyl-sn-glyceryl-L-cysteinyl-[lipoprotein] + a glycerophospholipid = N-acyl-S-1,2-diacyl-sn-glyceryl-L-cysteinyl-[lipoprotein] + a 2-acyl-sn-glycero-3-phospholipid + H(+). Its pathway is protein modification; lipoprotein biosynthesis (N-acyl transfer). Functionally, catalyzes the phospholipid dependent N-acylation of the N-terminal cysteine of apolipoprotein, the last step in lipoprotein maturation. In Helicobacter pylori (strain ATCC 700392 / 26695) (Campylobacter pylori), this protein is Apolipoprotein N-acyltransferase.